The primary structure comprises 137 residues: Bet1-like protein At4g14600 (137 aa).

The Cytoplasmic segment spans residues 1–113 (MASNPHRSGA…MSIIRSGNNH (113 aa)). Residues 43–105 (DPMHSDLDDE…KNNIRKLNMS (63 aa)) enclose the t-SNARE coiled-coil homology domain. Residues 114–134 (IMHVVLFALLVFFVLYIWSKM) form a helical; Anchor for type IV membrane protein membrane-spanning segment. The Vesicular segment spans residues 135–137 (FKR).

This sequence belongs to the BET1 family.

The protein localises to the golgi apparatus membrane. The protein resides in the endoplasmic reticulum membrane. Required for vesicular transport from the ER to the Golgi complex. Functions as a SNARE associated with ER-derived vesicles. The sequence is that of Bet1-like protein At4g14600 from Arabidopsis thaliana (Mouse-ear cress).